Here is a 488-residue protein sequence, read N- to C-terminus: Glutamyl-tRNA(Gln) amidotransferase subunit A (488 aa).

Residues Lys77 and Ser152 each act as charge relay system in the active site. The active-site Acyl-ester intermediate is the Ser176.

It belongs to the amidase family. GatA subfamily. In terms of assembly, heterotrimer of A, B and C subunits.

The enzyme catalyses L-glutamyl-tRNA(Gln) + L-glutamine + ATP + H2O = L-glutaminyl-tRNA(Gln) + L-glutamate + ADP + phosphate + H(+). Allows the formation of correctly charged Gln-tRNA(Gln) through the transamidation of misacylated Glu-tRNA(Gln) in organisms which lack glutaminyl-tRNA synthetase. The reaction takes place in the presence of glutamine and ATP through an activated gamma-phospho-Glu-tRNA(Gln). The protein is Glutamyl-tRNA(Gln) amidotransferase subunit A of Streptococcus pyogenes serotype M3 (strain ATCC BAA-595 / MGAS315).